Here is a 384-residue protein sequence, read N- to C-terminus: Thylakoid membrane protein TERC, chloroplastic (384 aa).

Residues 1–48 (MSLASVIHHGILPPAKSDRIFLTIPVFPPDFRARGWTKSPFSLLINPS) constitute a chloroplast transit peptide. At 49–115 (LASAANRRLS…DYQQEETYKT (67 aa)) the chain is on the stromal side. The interval 68–104 (GIDQEDEEKESRELLPHKNDENATTSRSSSSVDSGGL) is disordered. Residues 76–88 (KESRELLPHKNDE) are compositionally biased toward basic and acidic residues. The helical transmembrane segment at 116-136 (SFKTVALCVGTAVAFGIGIGL) threads the bilayer. The Lumenal, thylakoid segment spans residues 137-145 (KEGVGKASE). Residues 146–166 (FFAGYILEQSLSVDNLFVFVL) traverse the membrane as a helical segment. At 167–180 (VFKYFKVPLMYQNK) the chain is on the stromal side. A helical transmembrane segment spans residues 181–201 (VLTYGIAGAIVFRFTLILLGT). Residues 202 to 206 (ATLQK) are Lumenal, thylakoid-facing. Residues 207-227 (FEAVNLLLAAVLLYSSFKLFA) traverse the membrane as a helical segment. Over 228-275 (SEEDDTDLSDNFIVKTCQRFIPVTSSYDGNRFFTKHDGILKATPLLLT) the chain is Stromal. Residues 276–296 (VAVIELSDIAFAVDSIPAVFG) traverse the membrane as a helical segment. Over 297–301 (VTRDP) the chain is Lumenal, thylakoid. The helical transmembrane segment at 302–322 (FIVLTSNLFAILGLRSLYTLI) threads the bilayer. Topologically, residues 323–335 (SEGMDELEYLQPS) are stromal. Residues 336 to 356 (IAVVLGFIGVKMILDFFGFHI) form a helical membrane-spanning segment. Position 357 (serine 357) is a topological domain, lumenal, thylakoid. A helical membrane pass occupies residues 358-378 (TEASLGVVALSLSTGVLLSLT). Residues 379–384 (NKSSDS) are Stromal-facing.

In terms of assembly, interacts with ALB3. Expressed in roots, rosette and cauline leaves, stems and flowers.

The protein resides in the plastid. It is found in the chloroplast thylakoid membrane. In terms of biological role, integral thylakoid membrane protein that plays a crucial role in thylakoid membrane biogenesis and thylakoid formation in early chloroplast development. Is essential for de novo synthesis of photosystem II (PSII) core proteins and required for efficient insertion of thylakoid membrane proteins, presumably via interaction with ALB3. May assist synthesis of thylakoid membrane proteins at the membrane insertion step. The chain is Thylakoid membrane protein TERC, chloroplastic from Arabidopsis thaliana (Mouse-ear cress).